The chain runs to 181 residues: MAREKAQILDKDGIRRSLTRIAHEIIERNKGTGNLVLVGIRRRGVPLAERLAGRIKDIEGRTVPVGILDITLYRDDLTTLAHQPVVRSTEVPFSVSGKIVVLVDDVIYTGRTVRAALDAIMDLGRPKLIQLAVLIDRGHRELPIRADYVGKNVPTSSREEVSVRLQEIDGEERVVILETAE.

A PRPP-binding motif is present at residues 100–112 (VVLVDDVIYTGRT).

The protein belongs to the purine/pyrimidine phosphoribosyltransferase family. PyrR subfamily. As to quaternary structure, homodimer and homohexamer; in equilibrium.

It carries out the reaction UMP + diphosphate = 5-phospho-alpha-D-ribose 1-diphosphate + uracil. Functionally, regulates transcriptional attenuation of the pyrimidine nucleotide (pyr) operon by binding in a uridine-dependent manner to specific sites on pyr mRNA. This disrupts an antiterminator hairpin in the RNA and favors formation of a downstream transcription terminator, leading to a reduced expression of downstream genes. Its function is as follows. Also displays a weak uracil phosphoribosyltransferase activity which is not physiologically significant. The sequence is that of Bifunctional protein PyrR from Pelotomaculum thermopropionicum (strain DSM 13744 / JCM 10971 / SI).